We begin with the raw amino-acid sequence, 215 residues long: Small ribosomal subunit protein eS1 (215 aa).

It belongs to the eukaryotic ribosomal protein eS1 family.

The protein is Small ribosomal subunit protein eS1 of Halorubrum lacusprofundi (strain ATCC 49239 / DSM 5036 / JCM 8891 / ACAM 34).